The sequence spans 545 residues: Tetrahydrocannabinolic acid synthase (545 aa).

Positions 1 to 28 (MNCSAFSFWFVCKIIFFFLSFHIQISIA) are cleaved as a signal peptide. A disulfide bridge links Cys37 with Cys99. 2 N-linked (GlcNAc...) asparagine glycosylation sites follow: Asn65 and Asn89. Residues 77-251 (TTPKPLVIVT…AAWKIKLVAV (175 aa)) enclose the FAD-binding PCMH-type domain. FAD contacts are provided by residues 109 to 115 (TRSGGHD) and Ser120. The 6-(S-cysteinyl)-8alpha-(pros-histidyl)-FAD (His-Cys) cross-link spans 114 to 176 (HDAEGMSYIS…ENLSFPGGYC (63 aa)). Asn168 carries N-linked (GlcNAc...) asparagine glycosylation. FAD contacts are provided by residues Cys176, 180 to 184 (GVGGH), Tyr190, Glu236, and Ile241. Residue His292 coordinates cannabigerolate. N-linked (GlcNAc...) asparagine glycosylation is found at Asn297, Asn305, and Asn329. The cannabigerolate site is built by Tyr417 and Glu442. Residue Asn467 is glycosylated (N-linked (GlcNAc...) asparagine). 481–483 (YLN) serves as a coordination point for FAD. The active-site Proton acceptor is Tyr484. Asn499 carries an N-linked (GlcNAc...) asparagine glycan.

Belongs to the oxygen-dependent FAD-linked oxidoreductase family. As to quaternary structure, monomer. FAD serves as cofactor. In terms of processing, glycosylated when produced in a heterologous system. The deglycosylated THCA synthase has more catalytic activity than the glycosylated form. Post-translationally, the FAD cofactor is bound via a bicovalent 6-S-cysteinyl, 8alpha-N1-histidyl FAD linkage. As to expression, expressed in the secretory cells of glandular trichomes.

The protein localises to the secreted. It is found in the extracellular space. It localises to the apoplast. It carries out the reaction cannabigerolate + O2 = Delta(9)-tetrahydrocannabinolate + H2O2. Its pathway is secondary metabolite biosynthesis; terpenoid biosynthesis. Inhibited by Hg(2+). In terms of biological role, oxidoreductase involved in the biosynthesis of cannabinoids-related terpenophenolic natural products, which have pharmacological activity. Catalyzes the oxidative cyclization of the monoterpene moiety in cannabigerolic acid (CBGA), producing delta(9)-tetrahydrocannabinolate (THCA), the major cannabioid in drug-type Cannabis plants. Can also use cannabinerolic acid as substrate, but not cannabigerol or cannabinerol. In Cannabis sativa (Hemp), this protein is Tetrahydrocannabinolic acid synthase.